The primary structure comprises 213 residues: MKAYQREFIELALKKQVLKFGEFTLKSGRKSPYFFNAGLFNTGRDLALIGRFYAAALLDSGIQCDLLFGPAYKGIPIATTTAVALAEHHDIDMPYCFNRKEAKDHGEGGTLVGSPLKGNVVLVDDVITAGTAIRESMEIIKQHNATLAGVMICLDRQERGNGEISAIQEVERDYGCKVFSIITLNDLINYLSGQPEMKDHLDAVKAYRAQYGI.

Lys26 is a binding site for 5-phospho-alpha-D-ribose 1-diphosphate. 34–35 (FF) is a binding site for orotate. 5-phospho-alpha-D-ribose 1-diphosphate-binding positions include 72–73 (YK), Arg99, Lys100, Lys103, His105, and 124–132 (DDVITAGTA). Residues Thr128 and Arg156 each contribute to the orotate site.

This sequence belongs to the purine/pyrimidine phosphoribosyltransferase family. PyrE subfamily. As to quaternary structure, homodimer. Requires Mg(2+) as cofactor.

It catalyses the reaction orotidine 5'-phosphate + diphosphate = orotate + 5-phospho-alpha-D-ribose 1-diphosphate. It participates in pyrimidine metabolism; UMP biosynthesis via de novo pathway; UMP from orotate: step 1/2. Functionally, catalyzes the transfer of a ribosyl phosphate group from 5-phosphoribose 1-diphosphate to orotate, leading to the formation of orotidine monophosphate (OMP). This chain is Orotate phosphoribosyltransferase, found in Photorhabdus laumondii subsp. laumondii (strain DSM 15139 / CIP 105565 / TT01) (Photorhabdus luminescens subsp. laumondii).